Reading from the N-terminus, the 122-residue chain is MITQIDRKAIRMKKHKRVRKSVFGTAERPRLAVFRSLNHIYAQVINDELGVTLATASSLDAEFKAAELAGGNVEGAKKVGELVAKRAQEKGVSKVVFDRGGNIYHGRIAAVAEAAREAGLEF.

This sequence belongs to the universal ribosomal protein uL18 family. In terms of assembly, part of the 50S ribosomal subunit; part of the 5S rRNA/L5/L18/L25 subcomplex. Contacts the 5S and 23S rRNAs.

Functionally, this is one of the proteins that bind and probably mediate the attachment of the 5S RNA into the large ribosomal subunit, where it forms part of the central protuberance. The protein is Large ribosomal subunit protein uL18 of Desulfitobacterium hafniense (strain DSM 10664 / DCB-2).